The sequence spans 513 residues: Maturase K (513 aa).

Belongs to the intron maturase 2 family. MatK subfamily.

Its subcellular location is the plastid. It is found in the chloroplast. Usually encoded in the trnK tRNA gene intron. Probably assists in splicing its own and other chloroplast group II introns. This Typha latifolia (Bulrush) protein is Maturase K.